The sequence spans 440 residues: Chromosome partition protein MukF (440 aa).

The segment at 208–236 is leucine-zipper; that stretch reads LSETSGTLRELQDTLEAAGDKLQANLLRI.

The protein belongs to the MukF family. As to quaternary structure, interacts, and probably forms a ternary complex, with MukE and MukB via its C-terminal region. The complex formation is stimulated by calcium or magnesium. It is required for an interaction between MukE and MukB.

The protein localises to the cytoplasm. Its subcellular location is the nucleoid. Its function is as follows. Involved in chromosome condensation, segregation and cell cycle progression. May participate in facilitating chromosome segregation by condensation DNA from both sides of a centrally located replisome during cell division. Not required for mini-F plasmid partitioning. Probably acts via its interaction with MukB and MukE. Overexpression results in anucleate cells. It has a calcium binding activity. This chain is Chromosome partition protein MukF, found in Serratia proteamaculans (strain 568).